The primary structure comprises 169 residues: Signal peptidase complex subunit 1 (169 aa).

Residues 1-93 (MARGGDTGCT…QKLAEQMFQG (93 aa)) lie on the Cytoplasmic side of the membrane. A (Microbial infection) Interaction with JEV NS2B region spans residues 91–169 (FQGIILFSAI…RKIKRHAKNN (79 aa)). A helical transmembrane segment spans residues 94–114 (IILFSAIVGFIYGYVAEQFGW). The interval 110 to 169 (EQFGWTVYIVMAGFAFSCLLTLPPWPIYRRHPLKWLPVQESSTDDKKPGERKIKRHAKNN) is (Microbial infection) Interaction with HCV NS2 and HCV E2. T115 is a topological domain (lumenal). A helical membrane pass occupies residues 116-136 (VYIVMAGFAFSCLLTLPPWPI). Residues 137–169 (YRRHPLKWLPVQESSTDDKKPGERKIKRHAKNN) are Cytoplasmic-facing. Residues 148–169 (QESSTDDKKPGERKIKRHAKNN) form a disordered region.

This sequence belongs to the SPCS1 family. In terms of assembly, component of the signal peptidase complex paralog A (SPC-A) composed of a catalytic subunit SEC11A and three accessory subunits SPCS1, SPCS2 and SPCS3. Component of the signal peptidase complex paralog C (SPC-C) composed of a catalytic subunit SEC11C and three accessory subunits SPCS1, SPCS2 and SPCS3. Within the complex, interacts with SPCS2 and SPCS3. The complex induces a local thinning of the ER membrane which is used to measure the length of the signal peptide (SP) h-region of protein substrates. This ensures the selectivity of the complex towards h-regions shorter than 18-20 amino acids. As to quaternary structure, (Microbial infection) Interacts with hepatitis C virus (HCV) proteins NS2 and E2. Interacts with NS2B from Japanese encephalitis virus (JEV), West Nile virus (WNV), and Zika virus (ZIKV). May be phosphorylated.

It is found in the endoplasmic reticulum membrane. Its function is as follows. Component of the signal peptidase complex (SPC) which catalyzes the cleavage of N-terminal signal sequences from nascent proteins as they are translocated into the lumen of the endoplasmic reticulum. Dispensable for SPC enzymatic activity. In terms of biological role, (Microbial infection) Required for the post-translational processing of proteins involved in virion assembly and secretion from flaviviruses such as West Nile virus (WNV), Japanese encephalitis virus (JEV), Dengue virus type 2 (DENV-2), Yellow Fever virus (YFV), Zika virus (ZIKV) and hepatitis C virus (HCV). Plays a key role in the post-translational processing of flaviviral structural proteins prM, E, and NS1. In HCV, it is involved in virion assembly where it promotes the interaction between HCV virus proteins NS2 and E2. This Homo sapiens (Human) protein is Signal peptidase complex subunit 1 (SPCS1).